The chain runs to 251 residues: Small ribosomal subunit protein uS2 (251 aa).

This sequence belongs to the universal ribosomal protein uS2 family.

This is Small ribosomal subunit protein uS2 (rpsB) from Arthrospira platensis (Spirulina platensis).